Here is a 189-residue protein sequence, read N- to C-terminus: Potassium-transporting ATPase KdpC subunit (189 aa).

The chain crosses the membrane as a helical span at residues Leu11 to Ala31.

The protein belongs to the KdpC family. The system is composed of three essential subunits: KdpA, KdpB and KdpC.

The protein localises to the cell inner membrane. Its function is as follows. Part of the high-affinity ATP-driven potassium transport (or Kdp) system, which catalyzes the hydrolysis of ATP coupled with the electrogenic transport of potassium into the cytoplasm. This subunit acts as a catalytic chaperone that increases the ATP-binding affinity of the ATP-hydrolyzing subunit KdpB by the formation of a transient KdpB/KdpC/ATP ternary complex. In Polynucleobacter asymbioticus (strain DSM 18221 / CIP 109841 / QLW-P1DMWA-1) (Polynucleobacter necessarius subsp. asymbioticus), this protein is Potassium-transporting ATPase KdpC subunit.